A 504-amino-acid chain; its full sequence is Maturase K (504 aa).

It belongs to the intron maturase 2 family. MatK subfamily.

The protein resides in the plastid. It localises to the chloroplast. Usually encoded in the trnK tRNA gene intron. Probably assists in splicing its own and other chloroplast group II introns. The protein is Maturase K of Hamamelis japonica (Japanese witch hazel).